The primary structure comprises 130 residues: Methylglyoxal synthase (130 aa).

Residues 1 to 130 form the MGS-like domain; sequence MSKPRIALIA…DLARNMQDVC (130 aa). Residues His11, Lys15, 37–40, and 57–58 each bind substrate; these read TGTT and SG. Asp63 serves as the catalytic Proton donor/acceptor. Position 90 (His90) interacts with substrate.

It belongs to the methylglyoxal synthase family.

It carries out the reaction dihydroxyacetone phosphate = methylglyoxal + phosphate. Catalyzes the formation of methylglyoxal from dihydroxyacetone phosphate. The protein is Methylglyoxal synthase of Burkholderia orbicola (strain AU 1054).